A 1037-amino-acid chain; its full sequence is MWRCGGRQGLGVLRRLSGGHAHHRAWRWNSNRACERALQYKLGDKIHGFTVNQVTSVPELFLTAVKLIHDDTGARYLHLAREDTNNLFSVQFRTTPMDSTGVPHILEHTVLCGSQKYPCRDPFFRMLNRSLSTFMNAFTASDYTLYPFSTQNPKDFQNLLSVYLDATFFPCLRELDFWQEGWRLEHENPRDPQTALVFKGVVFNEMKGAFTDNERIFSQHLQNRLLPDHTYSVVSGGDPLCILELTWEQLKQFHATHYHPSNARFFTYGNFPLEQHLKQIHEEALSKFQKIEPSTAVPAQTPWDKPREFQITCGPDSFATDPSKQTTVSVSFLLPDITDTFEAFTLSLLSSLLTSGPNSPFYKALIESGLGTDFSPDVGYNGYTREAYFSVGLQGIAEKDIETVRSLVDRTIDEVVEKGFEDDRIEALLHKIEIQMKHQSTSFGLMLTSYIASCWNHDGDPVELLKLGNQLAKFRQCLQENPKFLQEKVKQYFKNNQHKLTLSMRPDDKYHEKQAQVEATKLKQKVEALSPGDRQQIYEKGLELRTQQSKPQDASCLPALKVSDIEPTIPVTELDVVLTAGDIPVQYCAQPTNGMVYFRAFSSLNTLPEELRPYVPLFCSVLTKLGCGLLDYREQAQQIELKTGGMSASPHVLPDDSHMDTYEQGVLFSSLCLDRNLPDMMHLWSEIFNNPCFEEEEHFKVLVKMTAQELTNAIPDSGHLYASIRAGRTLTPAGDLQETFSGMDRVRLMKRIAEMTDIKPILRKLPRIKKHLLNGDNMRCSVNATPQQMSQTEKAVEDFLRSIGRSKKERRPVRPHTVEKPVPSSSGGDAHVPHGSQIIRKLVTEPTFKPWQMKTHFLMPFPVNYVGECIRTVPYMDPDHASLKILARLMTAKFLHTEIREKGGAYGGGAKLSHNGIFSLYSYRDPNTIETLQSFGKAVDWAKSGKFTQQDIDEAKLSVFSTVDAPIAPSNKGMDYFLYGLSDGMKQAHREQLFAVSHDKLLAVSNRYLGTGKSTHSLAILGPENPKIAKDPSWTIR.

The N-terminal 15 residues, 1–15 (MWRCGGRQGLGVLRR), are a transit peptide targeting the mitochondrion. Residue H104 coordinates Zn(2+). E107 serves as the catalytic Proton acceptor. Zn(2+)-binding residues include H108 and E205. A disulfide bridge links C119 with C556. At K759 the chain carries N6-acetyllysine. K770 carries the N6-acetyllysine; alternate modification. An N6-succinyllysine; alternate modification is found at K770. The interval 803–834 (IGRSKKERRPVRPHTVEKPVPSSSGGDAHVPH) is disordered. Basic residues predominate over residues 804–814 (GRSKKERRPVR). K849 bears the N6-succinyllysine mark. K884 carries the post-translational modification N6-acetyllysine. K946 bears the N6-succinyllysine mark.

Belongs to the peptidase M16 family. PreP subfamily. As to quaternary structure, monomer and homodimer; homodimerization is induced by binding of the substrate. Zn(2+) serves as cofactor. Post-translationally, a disulfide bond locks the enzyme in the closed conformation preventing substrate entry into the catalytic chamber.

The protein localises to the mitochondrion matrix. Its activity is regulated as follows. Mainly exists in a closed and catalytically competent conformation but a closed-to-open switch allows substrate entry into the catalytic chamber. Substrate binding induces closure and dimerization. A disulfide bond may lock the enzyme in a closed conformation preventing substrate entry into the catalytic chamber, participating in redox regulation of the enzyme. Inhibited by metal-chelating agents. Inhibited by nickel and zinc excess, and slightly activated by manganese. Metalloendopeptidase of the mitochondrial matrix that functions in peptide cleavage and degradation rather than in protein processing. Has an ATP-independent activity. Specifically cleaves peptides in the range of 5 to 65 residues. Shows a preference for cleavage after small polar residues and before basic residues, but without any positional preference. Degrades the transit peptides of mitochondrial proteins after their cleavage. Also degrades other unstructured peptides. It is also able to degrade amyloid-beta protein 40, one of the peptides produced by APP processing, when it accumulates in mitochondrion. It is a highly efficient protease, at least toward amyloid-beta protein 40. Cleaves that peptide at a specific position and is probably not processive, releasing digested peptides intermediates that can be further cleaved subsequently. It is also able to degrade amyloid-beta protein 42. The polypeptide is Presequence protease, mitochondrial (Pongo abelii (Sumatran orangutan)).